A 308-amino-acid chain; its full sequence is Ornithine carbamoyltransferase (308 aa).

Carbamoyl phosphate is bound by residues 50 to 53 (STRT), Gln77, Arg101, and 128 to 131 (HPCQ). L-ornithine-binding positions include Asn160, Asp224, and 228–229 (SM). Carbamoyl phosphate-binding positions include 264 to 265 (CL) and Arg292.

Belongs to the aspartate/ornithine carbamoyltransferase superfamily. OTCase family.

The protein resides in the cytoplasm. It catalyses the reaction carbamoyl phosphate + L-ornithine = L-citrulline + phosphate + H(+). The protein operates within amino-acid biosynthesis; L-arginine biosynthesis; L-arginine from L-ornithine and carbamoyl phosphate: step 1/3. Functionally, reversibly catalyzes the transfer of the carbamoyl group from carbamoyl phosphate (CP) to the N(epsilon) atom of ornithine (ORN) to produce L-citrulline. The chain is Ornithine carbamoyltransferase from Mycobacterium ulcerans (strain Agy99).